We begin with the raw amino-acid sequence, 583 residues long: Aspartate--tRNA ligase (583 aa).

An L-aspartate-binding site is contributed by glutamate 174. An aspartate region spans residues 198 to 201 (QITK). An L-aspartate-binding site is contributed by arginine 220. Residues 220-222 (RDE) and glutamine 229 contribute to the ATP site. Histidine 443 provides a ligand contact to L-aspartate. Residue glutamate 477 coordinates ATP. Arginine 484 provides a ligand contact to L-aspartate. 529–532 (GLDR) provides a ligand contact to ATP.

The protein belongs to the class-II aminoacyl-tRNA synthetase family. Type 1 subfamily. In terms of assembly, homodimer.

Its subcellular location is the cytoplasm. It carries out the reaction tRNA(Asp) + L-aspartate + ATP = L-aspartyl-tRNA(Asp) + AMP + diphosphate. Its function is as follows. Catalyzes the attachment of L-aspartate to tRNA(Asp) in a two-step reaction: L-aspartate is first activated by ATP to form Asp-AMP and then transferred to the acceptor end of tRNA(Asp). This chain is Aspartate--tRNA ligase, found in Streptococcus suis (strain 98HAH33).